A 594-amino-acid polypeptide reads, in one-letter code: Probable translation initiation factor IF-2 (594 aa).

One can recognise a tr-type G domain in the interval 5–224 (YRAPIVVVVG…LMAGLTQRLV (220 aa)). Residues 14–21 (GHVDVGKT) are G1. GTP is bound at residue 14–21 (GHVDVGKT). The segment at 39 to 43 (MITQH) is G2. The interval 80–83 (DTPG) is G3. GTP contacts are provided by residues 80–84 (DTPGH) and 134–137 (NKVD). The tract at residues 134 to 137 (NKVD) is G4. The tract at residues 202–204 (SAV) is G5.

The protein belongs to the TRAFAC class translation factor GTPase superfamily. Classic translation factor GTPase family. IF-2 subfamily.

Functionally, function in general translation initiation by promoting the binding of the formylmethionine-tRNA to ribosomes. Seems to function along with eIF-2. The polypeptide is Probable translation initiation factor IF-2 (Caldivirga maquilingensis (strain ATCC 700844 / DSM 13496 / JCM 10307 / IC-167)).